We begin with the raw amino-acid sequence, 505 residues long: UDP-N-acetylmuramate--L-alanine ligase (505 aa).

164–170 provides a ligand contact to ATP; that stretch reads GTHGKTT.

Belongs to the MurCDEF family.

It is found in the cytoplasm. The catalysed reaction is UDP-N-acetyl-alpha-D-muramate + L-alanine + ATP = UDP-N-acetyl-alpha-D-muramoyl-L-alanine + ADP + phosphate + H(+). Its pathway is cell wall biogenesis; peptidoglycan biosynthesis. In terms of biological role, cell wall formation. This Synechocystis sp. (strain ATCC 27184 / PCC 6803 / Kazusa) protein is UDP-N-acetylmuramate--L-alanine ligase.